The sequence spans 709 residues: Elongation factor G (709 aa).

A tr-type G domain is found at 10-295 (NQIRNIGIMA…AVVDYLPSPE (286 aa)). GTP contacts are provided by residues 19-26 (AHIDAGKT), 91-95 (DTPGH), and 145-148 (NKMD).

It belongs to the TRAFAC class translation factor GTPase superfamily. Classic translation factor GTPase family. EF-G/EF-2 subfamily.

It localises to the cytoplasm. Functionally, catalyzes the GTP-dependent ribosomal translocation step during translation elongation. During this step, the ribosome changes from the pre-translocational (PRE) to the post-translocational (POST) state as the newly formed A-site-bound peptidyl-tRNA and P-site-bound deacylated tRNA move to the P and E sites, respectively. Catalyzes the coordinated movement of the two tRNA molecules, the mRNA and conformational changes in the ribosome. This chain is Elongation factor G, found in Bifidobacterium adolescentis (strain ATCC 15703 / DSM 20083 / NCTC 11814 / E194a).